A 527-amino-acid chain; its full sequence is Ribosomal protein S6 kinase beta-1 (527 aa).

Positions 1–54 (MRRRRRRDGFYPAPDFRDREAEDMAGVFDIDLDQPEDAGSEDELEEGGQLNESM) are disordered. The TOS motif signature appears at 28–32 (FDIDL). Over residues 30–46 (IDLDQPEDAGSEDELEE) the composition is skewed to acidic residues. The 262-residue stretch at 91–352 (FELLRVLGKG…AGEVQAHPFF (262 aa)) folds into the Protein kinase domain. ATP is bound by residues 97-105 (LGKGGYGKV) and K123. D218 serves as the catalytic Proton acceptor. At T252 the chain carries Phosphothreonine; by PDPK1. In terms of domain architecture, AGC-kinase C-terminal spans 353–423 (RHINWEELLA…VAPSVLESVK (71 aa)). S394 is subject to Phosphoserine. Phosphothreonine; by MTOR, NEK6 and NEK7 is present on T412. Residues 424 to 527 (EKFSFEPKIR…PEHLRMNLEL (104 aa)) are autoinhibitory domain. 2 positions are modified to phosphoserine: S434 and S441. Phosphothreonine is present on T444. Phosphoserine occurs at positions 447 and 452. An N6-acetyllysine modification is found at K516.

It belongs to the protein kinase superfamily. AGC Ser/Thr protein kinase family. S6 kinase subfamily. As to quaternary structure, interacts with PPP1R9A/neurabin-1. Interacts with RPTOR. Interacts with IRS1. Interacts with EIF3B and EIF3C. Interacts with TRAF4. Interacts with POLDIP3. Interacts (via N-terminus) with IER5. In terms of processing, phosphorylation at Thr-412 is regulated by mTORC1. The phosphorylation at this site is maintained by an agonist-dependent autophosphorylation mechanism. Activated by phosphorylation at Thr-252 by PDPK1. Dephosphorylation by PPP1CC at Thr-412 in mitochondrion.

It is found in the cytoplasm. It localises to the synapse. The protein localises to the synaptosome. The protein resides in the mitochondrion outer membrane. Its subcellular location is the mitochondrion. The enzyme catalyses L-seryl-[protein] + ATP = O-phospho-L-seryl-[protein] + ADP + H(+). It carries out the reaction L-threonyl-[protein] + ATP = O-phospho-L-threonyl-[protein] + ADP + H(+). Inactivated by binding to URI1. Activation requires multiple phosphorylation events on serine/threonine residues. Activation appears to be first mediated by phosphorylation of multiple sites in the autoinhibitory domain, which facilitates phosphorylation at Thr-412, disrupting the autoinhibitory mechanism and allowing phosphorylation of Thr-252 by PDPK1. The active conformation of the kinase is believed to be stabilized by a mechanism involving three conserved phosphorylation sites located in the kinase domain activation loop (Thr-252) and in the AGC-kinase C-terminal domain (Ser-394 in the middle of the tail/linker region and Thr-412 within a hydrophobic motif at its end). Activated by mTORC1; isoform Alpha I and isoform Alpha II are sensitive to rapamycin, which inhibits activating phosphorylation at Thr-412. Activated by PDPK1. Functionally, serine/threonine-protein kinase that acts downstream of mTOR signaling in response to growth factors and nutrients to promote cell proliferation, cell growth and cell cycle progression. Regulates protein synthesis through phosphorylation of EIF4B, RPS6 and EEF2K, and contributes to cell survival by repressing the pro-apoptotic function of BAD. Under conditions of nutrient depletion, the inactive form associates with the EIF3 translation initiation complex. Upon mitogenic stimulation, phosphorylation by the mechanistic target of rapamycin complex 1 (mTORC1) leads to dissociation from the EIF3 complex and activation. The active form then phosphorylates and activates several substrates in the pre-initiation complex, including the EIF2B complex and the cap-binding complex component EIF4B. Also controls translation initiation by phosphorylating a negative regulator of EIF4A, PDCD4, targeting it for ubiquitination and subsequent proteolysis. Promotes initiation of the pioneer round of protein synthesis by phosphorylating POLDIP3/SKAR. In response to IGF1, activates translation elongation by phosphorylating EEF2 kinase (EEF2K), which leads to its inhibition and thus activation of EEF2. Also plays a role in feedback regulation of mTORC2 by mTORC1 by phosphorylating MAPKAP1/SIN1, MTOR and RICTOR, resulting in the inhibition of mTORC2 and AKT1 signaling. Also involved in feedback regulation of mTORC1 and mTORC2 by phosphorylating DEPTOR. Mediates cell survival by phosphorylating the pro-apoptotic protein BAD and suppressing its pro-apoptotic function. Phosphorylates mitochondrial URI1 leading to dissociation of a URI1-PPP1CC complex. The free mitochondrial PPP1CC can then dephosphorylate RPS6KB1 at Thr-412, which is proposed to be a negative feedback mechanism for the RPS6KB1 anti-apoptotic function. Mediates TNF-alpha-induced insulin resistance by phosphorylating IRS1 at multiple serine residues, resulting in accelerated degradation of IRS1. In cells lacking functional TSC1-2 complex, constitutively phosphorylates and inhibits GSK3B. May be involved in cytoskeletal rearrangement through binding to neurabin. Phosphorylates and activates the pyrimidine biosynthesis enzyme CAD, downstream of MTOR. Following activation by mTORC1, phosphorylates EPRS and thereby plays a key role in fatty acid uptake by adipocytes and also most probably in interferon-gamma-induced translation inhibition. The sequence is that of Ribosomal protein S6 kinase beta-1 (RPS6KB1) from Bos taurus (Bovine).